A 306-amino-acid chain; its full sequence is Palmitoyl-protein thioesterase 1 (306 aa).

The N-terminal stretch at 1–27 (MASSCSRRLLAAALLPWCCAAWALGHL) is a signal peptide. 3 disulfides stabilise this stretch: C45–C46, C96–C128, and C152–C160. The active site involves S115. N197, N212, and N232 each carry an N-linked (GlcNAc...) asparagine glycan. Active-site residues include D233 and H289.

The protein belongs to the palmitoyl-protein thioesterase family. As to quaternary structure, interacts with CLN5, ATP5F1A and ATP5F1B. In terms of processing, glycosylated. As to expression, highest level in testis and kidney, lower in heart, brain and lung and lowest in skeletal muscle.

It localises to the lysosome. The protein resides in the secreted. Its subcellular location is the golgi apparatus. The protein localises to the endoplasmic reticulum. The enzyme catalyses S-hexadecanoyl-L-cysteinyl-[protein] + H2O = L-cysteinyl-[protein] + hexadecanoate + H(+). It carries out the reaction hexadecanoyl-CoA + H2O = hexadecanoate + CoA + H(+). The catalysed reaction is S-hexadecanoyl-N-acetylcysteamine + H2O = N-acetylcysteamine + hexadecanoate + H(+). It catalyses the reaction S-hexadecanoyl-N-acetylcysteine methyl ester + H2O = N-acetylcysteine methyl ester + hexadecanoate + H(+). In terms of biological role, has thioesterase activity against fatty acid thioesters with 14 -18 carbons, including palmitoyl-CoA, S-palmitoyl-N-acetylcysteamine, and palmitoylated proteins. In contrast to PPT2, PPT1 can hydrolyze palmitoylated proteins and palmitoylcysteine. The sequence is that of Palmitoyl-protein thioesterase 1 (Ppt1) from Mus musculus (Mouse).